Reading from the N-terminus, the 346-residue chain is Annexin A1 (346 aa).

Alanine 2 bears the N-acetylalanine mark. The residue at position 5 (serine 5) is a Phosphoserine; by TRPM7. Glutamine 19 participates in a covalent cross-link: Isoglutamyl lysine isopeptide (Gln-Lys) (interchain with K-?). Residue tyrosine 21 is modified to Phosphotyrosine; by EGFR. A phosphoserine mark is found at serine 34 and serine 37. At threonine 41 the chain carries Phosphothreonine. 4 Annexin repeats span residues 42–113 (FNPS…ALLK), 114–185 (TPAQ…SLAK), 197–269 (DLAD…VIVK), and 273–344 (SQPM…ALCG). The residue at position 58 (lysine 58) is an N6-acetyllysine. Ca(2+)-binding residues include glycine 59, valine 60, glutamate 62, lysine 97, leucine 100, glutamate 105, methionine 127, glycine 129, glycine 131, threonine 132, and glutamate 134. Phosphothreonine is present on threonine 136. Ca(2+) contacts are provided by aspartate 171, glycine 210, and arginine 213. A Glycyl lysine isopeptide (Lys-Gly) (interchain with G-Cter in SUMO1); alternate cross-link involves residue lysine 214. Lysine 214 is covalently cross-linked (Glycyl lysine isopeptide (Lys-Gly) (interchain with G-Cter in SUMO2); alternate). Glycine 215 provides a ligand contact to Ca(2+). Lysine 239 carries the post-translational modification N6-acetyllysine. 3 residues coordinate Ca(2+): aspartate 253, glutamate 255, and leucine 256. Lysine 257 participates in a covalent cross-link: Glycyl lysine isopeptide (Lys-Gly) (interchain with G-Cter in SUMO1). Ca(2+) contacts are provided by glutamate 261, methionine 286, glycine 288, and glycine 290. Position 312 is an N6-acetyllysine (lysine 312). A disulfide bridge links cysteine 324 with cysteine 343. Ca(2+) contacts are provided by leucine 328, glutamate 330, and threonine 331. A Glycyl lysine isopeptide (Lys-Gly) (interchain with G-Cter in SUMO1) cross-link involves residue lysine 332. Residue glutamate 336 participates in Ca(2+) binding.

This sequence belongs to the annexin family. Homodimer; non-covalently linked. Homodimer; linked by transglutamylation. Homodimers linked by transglutamylation are observed in placenta, but not in other tissues. Interacts with S100A11. Heterotetramer, formed by two molecules each of S100A11 and ANXA1. Interacts with DYSF. Interacts with EGFR. Phosphorylated by protein kinase C, EGFR and TRPM7. Phosphorylated in response to EGF treatment. In terms of processing, sumoylated. Post-translationally, proteolytically cleaved by cathepsin CTSG to release the active N-terminal peptide Ac2-26. As to expression, detected on surface epithelia and mucosal glands in nasal cavity, trachea, bronchi and bronchioles. Detected in blood vessel endothelial cells. Detected in neutrophils (at protein level).

It is found in the nucleus. Its subcellular location is the cytoplasm. The protein resides in the cell projection. The protein localises to the cilium. It localises to the basolateral cell membrane. It is found in the lateral cell membrane. Its subcellular location is the cell membrane. The protein resides in the apical cell membrane. The protein localises to the membrane. It localises to the endosome membrane. It is found in the secreted. Its subcellular location is the extracellular space. The protein resides in the early endosome. The protein localises to the cytoplasmic vesicle membrane. It localises to the extracellular exosome. It is found in the cytoplasmic vesicle. Its subcellular location is the secretory vesicle lumen. The protein resides in the phagocytic cup. Plays important roles in the innate immune response as effector of glucocorticoid-mediated responses and regulator of the inflammatory process. Has anti-inflammatory activity. Plays a role in glucocorticoid-mediated down-regulation of the early phase of the inflammatory response. Contributes to the adaptive immune response by enhancing signaling cascades that are triggered by T-cell activation, regulates differentiation and proliferation of activated T-cells. Promotes the differentiation of T-cells into Th1 cells and negatively regulates differentiation into Th2 cells. Has no effect on unstimulated T-cells. Negatively regulates hormone exocytosis via activation of the formyl peptide receptors and reorganization of the actin cytoskeleton. Has high affinity for Ca(2+) and can bind up to eight Ca(2+) ions. Displays Ca(2+)-dependent binding to phospholipid membranes. Plays a role in the formation of phagocytic cups and phagosomes. Plays a role in phagocytosis by mediating the Ca(2+)-dependent interaction between phagosomes and the actin cytoskeleton. Its function is as follows. Functions at least in part by activating the formyl peptide receptors and downstream signaling cascades. Promotes chemotaxis of granulocytes and monocytes via activation of the formyl peptide receptors. Promotes rearrangement of the actin cytoskeleton, cell polarization and cell migration. Promotes resolution of inflammation and wound healing. Acts via neutrophil N-formyl peptide receptors to enhance the release of CXCL2. This Bos taurus (Bovine) protein is Annexin A1 (ANXA1).